The following is a 507-amino-acid chain: Sulfatase (507 aa).

A signal peptide spans 1-18 (MKTRYFLLLGICMLSCRT). Positions 39, 40, and 79 each coordinate Ca(2+). C79 acts as the Nucleophile in catalysis. C79 is modified (3-oxoalanine (Cys)). Residue H139 is part of the active site. D325 and H326 together coordinate Ca(2+).

This sequence belongs to the sulfatase family. Requires Ca(2+) as cofactor. Post-translationally, the conversion to 3-oxoalanine (also known as C-formylglycine, FGly), of a serine or cysteine residue in prokaryotes and of a cysteine residue in eukaryotes, is critical for catalytic activity. This post-translational modification is severely defective in multiple sulfatase deficiency (MSD).

Its subcellular location is the periplasm. In terms of biological role, sulfatase that may be involved in ulvan degradation. Ulvan is the main polysaccharide component of the Ulvales (green seaweed) cell wall. It is composed of disaccharide building blocks comprising 3-sulfated rhamnose (Rha3S) linked to D-glucuronic acid (GlcA), L-iduronic acid (IduA), or D-xylose (Xyl). Has no activity on different ulvan polymers. The polypeptide is Sulfatase (Formosa agariphila (strain DSM 15362 / KCTC 12365 / LMG 23005 / KMM 3901 / M-2Alg 35-1)).